The sequence spans 747 residues: MDGGGSSSWTHVSKNLIERRAVKGCLLPTPSDVMDAAVMALKDVTENIVGQQLFSVDRTNALSVIHTNEVPESIIATAIARDTSRDYLREYEGAAKCNLAATDLSHDEMWEVVIKRYWRYLRESSGAEVVDRGAVGQATQSVLSVLLLQSTFGKKRLSKNPFKHKGPNVGYKSNLEDLRSAFTKIEKYMYYMRPNDPMTKSEDTELRLHELLAYVTTCYRWLLWFMDLTDAKVLRNIDKGPVITHGPRESRPPDELVRRHLKSGPAISAGTGVALTLSTATADALIVLLRMSVSWTSHSWKSNTHGVTGAIVAAVELVTLIHHHLQYIINTVFAGYVCWLDGGVENSYLNSALRSQGRFDHFVGKLVPIMATLSWANMEKGTVMWFKYALAKSIVCHGSPTQHYLTVLESIASKRTGACPPQGSTFGRNPSGFPGQFCCPPQGPLPAPPNSKTRGTFRRCRPGSLRSSRQLPTSPPSNIVSPRTNPAIEGSTAAKNVQGAETIQVRSSGEFNDCIWYINGAYPHQRSDSSSSDNSTCSSTETQYITLPSTPSPTGDVVYTNPLLGPDEEVDASPQPVDPMSDYSAPKNPDYMRPRSTLVEEVWQLRDSDYTPYMRPSRAGRSRVRVEDQTLEPSSPAGCNPPANSPENDSDDAAVDSPPISPEVVYGTFRPRAKCVYDQYGLTALAALSASRAKARRTRPGPTQPDVCRERDEESAEPRHDGFIRRTMSTTGPPRKHPDQTERVSSL.

Disordered regions lie at residues 437 to 484 (FCCP…SPRT), 525 to 593 (QRSD…DYMR), 611 to 665 (TPYM…PEVV), and 689 to 747 (SASR…VSSL). A compositionally biased stretch (polar residues) spans 465–484 (LRSSRQLPTSPPSNIVSPRT). A compositionally biased stretch (low complexity) spans 528–540 (DSSSSDNSTCSST). A compositionally biased stretch (polar residues) spans 541-553 (ETQYITLPSTPSP). Basic and acidic residues-rich tracts occupy residues 707–724 (VCRE…DGFI) and 736–747 (KHPDQTERVSSL).

This sequence belongs to the herpesviridae HHV-1 VP11/12 protein family.

Its subcellular location is the virion tegument. The protein resides in the host cell membrane. Functionally, modulates alpha trans-inducing factor-dependent activation of alpha genes. The chain is Tegument protein UL46 homolog from Equine herpesvirus 1 (strain Ab4p) (EHV-1).